The following is a 371-amino-acid chain: uncharacterized protein (371 aa).

Residues 287 to 323 (EVVTALDRYRQHLRETRERLEEKQGKLLEELKGYESM) are a coiled coil.

This is an uncharacterized protein from Aspergillus fumigatus (strain ATCC MYA-4609 / CBS 101355 / FGSC A1100 / Af293) (Neosartorya fumigata).